A 686-amino-acid chain; its full sequence is Methionine--tRNA ligase (686 aa).

Positions 22-32 (PYANGPIHLGH) match the 'HIGH' region motif. Zn(2+)-binding residues include C153, C156, C166, and C169. The 'KMSKS' region signature appears at 337 to 341 (KMSKS). K340 contacts ATP. The disordered stretch occupies residues 547-573 (MLEDSKESTPAPAAAKPKKAATQKADA). The 103-residue stretch at 584 to 686 (DFLKVKLRVA…SGAEPGMEVR (103 aa)) folds into the tRNA-binding domain.

Belongs to the class-I aminoacyl-tRNA synthetase family. MetG type 1 subfamily. In terms of assembly, homodimer. The cofactor is Zn(2+).

Its subcellular location is the cytoplasm. It carries out the reaction tRNA(Met) + L-methionine + ATP = L-methionyl-tRNA(Met) + AMP + diphosphate. Its function is as follows. Is required not only for elongation of protein synthesis but also for the initiation of all mRNA translation through initiator tRNA(fMet) aminoacylation. The polypeptide is Methionine--tRNA ligase (Alcanivorax borkumensis (strain ATCC 700651 / DSM 11573 / NCIMB 13689 / SK2)).